The primary structure comprises 297 residues: 4-hydroxy-tetrahydrodipicolinate synthase (297 aa).

Pyruvate is bound at residue Thr-46. The active-site Proton donor/acceptor is Tyr-134. Lys-163 functions as the Schiff-base intermediate with substrate in the catalytic mechanism. Position 205 (Ile-205) interacts with pyruvate.

It belongs to the DapA family. Homotetramer; dimer of dimers.

It is found in the cytoplasm. It catalyses the reaction L-aspartate 4-semialdehyde + pyruvate = (2S,4S)-4-hydroxy-2,3,4,5-tetrahydrodipicolinate + H2O + H(+). The protein operates within amino-acid biosynthesis; L-lysine biosynthesis via DAP pathway; (S)-tetrahydrodipicolinate from L-aspartate: step 3/4. Its function is as follows. Catalyzes the condensation of (S)-aspartate-beta-semialdehyde [(S)-ASA] and pyruvate to 4-hydroxy-tetrahydrodipicolinate (HTPA). This chain is 4-hydroxy-tetrahydrodipicolinate synthase, found in Thermoanaerobacter pseudethanolicus (strain ATCC 33223 / 39E) (Clostridium thermohydrosulfuricum).